Here is an 89-residue protein sequence, read N- to C-terminus: Small ribosomal subunit protein uS15 (89 aa).

The protein belongs to the universal ribosomal protein uS15 family. In terms of assembly, part of the 30S ribosomal subunit. Forms a bridge to the 50S subunit in the 70S ribosome, contacting the 23S rRNA.

Its function is as follows. One of the primary rRNA binding proteins, it binds directly to 16S rRNA where it helps nucleate assembly of the platform of the 30S subunit by binding and bridging several RNA helices of the 16S rRNA. Forms an intersubunit bridge (bridge B4) with the 23S rRNA of the 50S subunit in the ribosome. The sequence is that of Small ribosomal subunit protein uS15 from Klebsiella pneumoniae (strain 342).